We begin with the raw amino-acid sequence, 106 residues long: Urease subunit beta (106 aa).

This sequence belongs to the urease beta subunit family. In terms of assembly, heterotrimer of UreA (gamma), UreB (beta) and UreC (alpha) subunits. Three heterotrimers associate to form the active enzyme.

It localises to the cytoplasm. It carries out the reaction urea + 2 H2O + H(+) = hydrogencarbonate + 2 NH4(+). It participates in nitrogen metabolism; urea degradation; CO(2) and NH(3) from urea (urease route): step 1/1. This is Urease subunit beta from Prochlorococcus marinus (strain MIT 9215).